Here is a 383-residue protein sequence, read N- to C-terminus: Protein RecA (383 aa).

ATP is bound at residue 79 to 86 (GPESSGKT).

Belongs to the RecA family.

It localises to the cytoplasm. Its function is as follows. Can catalyze the hydrolysis of ATP in the presence of single-stranded DNA, the ATP-dependent uptake of single-stranded DNA by duplex DNA, and the ATP-dependent hybridization of homologous single-stranded DNAs. It interacts with LexA causing its activation and leading to its autocatalytic cleavage. This is Protein RecA from Streptococcus gordonii (strain Challis / ATCC 35105 / BCRC 15272 / CH1 / DL1 / V288).